The sequence spans 439 residues: MSAAQGWDRNRRRGGGAAGGASGVSGAGAAGGGRGTGQLNRFVQLSGRPHLPGKKKIRWDPVRRRFIQSCPIIRIPNRFLRGHRPPPARSGHRCVADNTNLYVFGGYNPDYDESGGPDNEDYPLFRELWRYHFATGVWHQMGTDGYMPRELASMSLVLHGNNLLVFGGTGIPFGESNGNDVHVCNVKYKRWALLSCRGKRPSRIYGQAMALINGSLYVFGGTTGYIYSTDLHKLDLNTMVWTQLKPNNLSCDLPEERYRHEIAHDGQRIYILGGGTSWTAYSLNKIHAYNLETNAWEEIATKPHEKIGFPAARRCHSCVQIKNDVFICGGYNGEVILGDIWKLNLQTFQWVKLPATMPEPVYFHCAAVTPAGCMYIHGGVVNIHENKRTGSLFKIWLVVPSLLELAWEKLLAAFPNLANLSRTQLLHLGLTQELIERLK.

The disordered stretch occupies residues 1-50 (MSAAQGWDRNRRRGGGAAGGASGVSGAGAAGGGRGTGQLNRFVQLSGRPH). At Arg13 the chain carries Omega-N-methylarginine. The span at 15–36 (GGAAGGASGVSGAGAAGGGRGT) shows a compositional bias: gly residues. Kelch repeat units follow at residues 87 to 154 (PARS…LASM), 155 to 198 (SLVL…SCRG), 199 to 260 (KRPS…RYRH), 261 to 319 (EIAH…HSCV), 320 to 364 (QIKN…VYFH), and 365 to 403 (CAAVTPAGCMYIHGGVVNIHENKRTGSLFKIWLVVPSLL). Residues 398–439 (VVPSLLELAWEKLLAAFPNLANLSRTQLLHLGLTQELIERLK) are interaction with CUL2.

Belongs to the KLHDC10 family. In terms of assembly, component of a CRL2 E3 ubiquitin-protein ligase complex, also named ECS (Elongin BC-CUL2/5-SOCS-box protein) complex, composed of CUL2, Elongin BC (ELOB and ELOC), RBX1 and substrate-specific adapter KLHDC10. Interacts (via the 6 Kelch repeats) with PPP5C.

It localises to the nucleus. The protein resides in the cytoplasm. It participates in protein modification; protein ubiquitination. Its function is as follows. Substrate-recognition component of a Cul2-RING (CRL2) E3 ubiquitin-protein ligase complex of the DesCEND (destruction via C-end degrons) pathway, which recognizes a C-degron located at the extreme C-terminus of target proteins, leading to their ubiquitination and degradation. The C-degron recognized by the DesCEND pathway is usually a motif of less than ten residues and can be present in full-length proteins, truncated proteins or proteolytically cleaved forms. The CRL2(KLHDC10) complex specifically recognizes proteins with a proline-glycine (Pro-Gly) or an alanine tail (CAT tail) at the C-terminus, leading to their ubiquitination and degradation. The CRL2(KLHDC10) complex is involved in the ribosome-associated quality control (RQC) pathway, which mediates the extraction of incompletely synthesized nascent chains from stalled ribosomes: CRL2(KLHDC10) acts downstream of NEMF and recognizes CAT tails associated with stalled nascent chains, leading to their ubiquitination and degradation. Participates in the oxidative stress-induced cell death through MAP3K5 activation. Inhibits PPP5C phosphatase activity on MAP3K5. Acts as a regulator of necroptosis. In Mus musculus (Mouse), this protein is Kelch domain-containing protein 10.